Consider the following 289-residue polypeptide: HTH-type transcriptional regulator SoxR (289 aa).

The 58-residue stretch at 1-58 (MEIKDLQIFQKVVEYGSVSKAAKSLNYVQSYVTVRIQKLEEELQTELFHRSSRGMVLN) folds into the HTH lysR-type domain. The segment at residues 18–37 (VSKAAKSLNYVQSYVTVRIQ) is a DNA-binding region (H-T-H motif).

Belongs to the LysR transcriptional regulatory family.

In terms of biological role, transcriptional repressor of soxA gene expression. This chain is HTH-type transcriptional regulator SoxR (soxR), found in Arthrobacter sp. (strain TE1826).